The chain runs to 649 residues: Choline transporter-like protein 3 (649 aa).

The helical transmembrane segment at 33 to 53 (AWLFLFFLFWTGLVFIMGYSV) threads the bilayer. Asn136 and Asn151 each carry an N-linked (GlcNAc...) asparagine glycan. 5 helical membrane-spanning segments follow: residues 213–233 (DTVLGLCILAFALSLAMMFTF), 235–255 (FITTLLVHIFIALIVLGLLFV), 284–304 (LLGFAIVSTVITAVLLILIYV), 334–354 (LWTFAILIFFWVLWVAVLLSL), and 384–404 (LIGLIWTSEFILACQQMAVAG). N-linked (GlcNAc...) asparagine glycosylation is found at Asn414, Asn502, and Asn520. 2 helical membrane-spanning segments follow: residues 533–553 (FIIFLGKVLVVCFTVFGGLMA) and 562–582 (VWAVPLLLVAFFAYLVAHSFL).

This sequence belongs to the CTL (choline transporter-like) family.

It is found in the membrane. This is Choline transporter-like protein 3 (SLC44A3) from Bos taurus (Bovine).